The sequence spans 266 residues: MDIFQVIVLALIQGLTEFLPISSSAHLILPAQLLGWQDQGLTFDVAVNTGSLLAVVIYFRRELFSMFTAWTSSLVTRQQTQESKLAWWIILATIPAVIFGFTAKDFISTHLRNIEVIATTTIVFGLLLWWADKLNREGFSEFQVGWKKALLIGFAQAMALIPGTSRSGATITAALALGLSREAAARFSFLMSVPVSLGAAILVVKDLLSSQEAIDYQALVLGTALSFVAAYLCIHYFLKIISRMGMTPFVIYRLALGAILCVVIFA.

The next 8 helical transmembrane spans lie at 1-21 (MDIF…FLPI), 39-59 (QGLT…VIYF), 87-107 (WWII…KDFI), 114-134 (IEVI…ADKL), 144-164 (VGWK…IPGT), 184-204 (AARF…ILVV), 218-238 (ALVL…HYFL), and 246-266 (MTPF…VIFA).

Belongs to the UppP family.

It is found in the cell inner membrane. The catalysed reaction is di-trans,octa-cis-undecaprenyl diphosphate + H2O = di-trans,octa-cis-undecaprenyl phosphate + phosphate + H(+). Catalyzes the dephosphorylation of undecaprenyl diphosphate (UPP). Confers resistance to bacitracin. The chain is Undecaprenyl-diphosphatase from Shewanella loihica (strain ATCC BAA-1088 / PV-4).